The chain runs to 1495 residues: Nuclear pore complex protein NUP160 (1495 aa).

In terms of assembly, part of the nuclear pore complex (NPC). The NPC has an eight-fold symmetrical structure comprising a central transport channel and two rings, the cytoplasmic and nuclear rings, to which eight filaments are attached. The cytoplasmic filaments have loose ends, while the nuclear filaments are joined in a distal ring, forming a nuclear basket. NPCs are highly dynamic in configuration and composition, and can be devided in 3 subcomplexes, the NUP62 subcomplex, the NUP107-160 subcomplex and the NUP93 subcomplex, containing approximately 30 different nucleoporin proteins. In terms of tissue distribution, expressed in roots, stems, anthers, siliques and vascular tissues of cotyledons, leaves and hypocotyls.

It localises to the nucleus membrane. It is found in the nucleus. The protein localises to the nuclear pore complex. Its function is as follows. Contributes to the transfer of mature mRNA from the nucleus to the cytosol. Required for both R gene-mediated and basal disease resistance. RNA export seems to play a critical role in stress responses and regulation of plant growth and development. Required for proper expression of factors associated with auxin signaling. The sequence is that of Nuclear pore complex protein NUP160 from Arabidopsis thaliana (Mouse-ear cress).